Consider the following 493-residue polypeptide: Guanosine-5'-triphosphate,3'-diphosphate pyrophosphatase (493 aa).

Belongs to the GppA/Ppx family. GppA subfamily.

It carries out the reaction guanosine 3'-diphosphate 5'-triphosphate + H2O = guanosine 3',5'-bis(diphosphate) + phosphate + H(+). Its pathway is purine metabolism; ppGpp biosynthesis; ppGpp from GTP: step 2/2. Functionally, catalyzes the conversion of pppGpp to ppGpp. Guanosine pentaphosphate (pppGpp) is a cytoplasmic signaling molecule which together with ppGpp controls the 'stringent response', an adaptive process that allows bacteria to respond to amino acid starvation, resulting in the coordinated regulation of numerous cellular activities. This Salmonella choleraesuis (strain SC-B67) protein is Guanosine-5'-triphosphate,3'-diphosphate pyrophosphatase.